Consider the following 764-residue polypeptide: Oxysterol-binding protein-related protein 10 (764 aa).

Residues Met1 to Glu74 form a disordered region. Low complexity-rich tracts occupy residues Asn15–Ala47 and Arg55–Pro65. Phosphoserine occurs at positions 29 and 30. Position 38 is an omega-N-methylarginine (Arg38). Residues Ser57, Ser60, and Ser64 each carry the phosphoserine modification. In terms of domain architecture, PH spans Glu74–Lys171. Phosphothreonine is present on Thr196. Phosphoserine is present on residues Ser201, Ser209, and Ser223. 2 disordered regions span residues Gly304–Leu335 and Ala354–Gly391. The span at Thr359–Ser370 shows a compositional bias: polar residues. A compositionally biased stretch (acidic residues) spans Leu374–Glu389. A 1,2-diacyl-sn-glycero-3-phospho-(1D-myo-inositol 4-phosphate) contacts are provided by residues Leu413–Leu418 and Lys477–Asn480. A 1,2-diacyl-sn-glycero-3-phospho-L-serine contacts are provided by residues Leu413–Leu418 and Asn480. The segment at Lys501 to Pro520 is disordered. Positions Cys511 to Pro520 are enriched in basic and acidic residues. His535–His536 contacts a 1,2-diacyl-sn-glycero-3-phospho-(1D-myo-inositol 4-phosphate). Ser561 is a binding site for a 1,2-diacyl-sn-glycero-3-phospho-L-serine. The stretch at Asp713–Thr740 forms a coiled coil. A 1,2-diacyl-sn-glycero-3-phospho-(1D-myo-inositol 4-phosphate) is bound by residues Lys721, Glu725, and Arg729.

Belongs to the OSBP family. As to quaternary structure, interacts with OSBPL9. Interacts with DIAPH1.

The protein resides in the cytoplasm. It is found in the cytoskeleton. Its function is as follows. Probable lipid transporter involved in lipid countertransport between the endoplasmic reticulum and the plasma membrane. Its ability to bind phosphatidylserine, suggests that it specifically exchanges phosphatidylserine with phosphatidylinositol 4-phosphate (PI4P), delivering phosphatidylserine to the plasma membrane in exchange for PI4P. Plays a role in negative regulation of lipid biosynthesis. Negatively regulates APOB secretion from hepatocytes. Binds cholesterol and acidic phospholipids. Also binds 25-hydroxycholesterol. Binds phosphatidylserine. In Homo sapiens (Human), this protein is Oxysterol-binding protein-related protein 10 (OSBPL10).